A 466-amino-acid polypeptide reads, in one-letter code: Cell division protein FtsP (466 aa).

A signal peptide (tat-type signal) is located at residues 1–28; that stretch reads MGNYSRRRFLQGSLAIVAGNVLPCAAMA.

The protein belongs to the FtsP family. Post-translationally, predicted to be exported by the Tat system. The position of the signal peptide cleavage has not been experimentally proven.

The protein localises to the periplasm. In terms of biological role, cell division protein that is required for growth during stress conditions. May be involved in protecting or stabilizing the divisomal assembly under conditions of stress. This is Cell division protein FtsP from Gallibacterium anatis (strain UMN179) (Pasteurella anatis).